Here is a 371-residue protein sequence, read N- to C-terminus: ADP-ribosylarginine hydrolase Tri1 (371 aa).

The interval Met1–Pro61 is N-terminal extension. Residues Gly70–Glu362 are ADP-ribosyl hydrolase domain. The Mg(2+) site is built by Thr112, Asp113, Asp114, Asp157, and Asp313.

This sequence belongs to the ADP-ribosylglycohydrolase family. Mg(2+) serves as cofactor.

It carries out the reaction N(omega)-(ADP-D-ribosyl)-L-arginyl-[protein] + H2O = ADP-D-ribose + L-arginyl-[protein]. Functionally, immunity component of an interbacterial competition system (also called effector-immunity systems). Expression in E.coli neutralizes the toxic effects of non-cognate S.proteamaculans effector protein Tre1 (Tre1-Sp); cannot be co-purified with Tre1-Sp from E.coli, suggesting they do not form a stable complex. Probably acts as an arginine mono-ADP-ribosylhydrolase, mediating the removal of mono-ADP-ribose attached to arginine residues on proteins. Probably de-ADP-ribosylates FtsZ and possibly other proteins; the ability to hydrolyze ADP-ribosyl moieties is not essential for neutralization of its cognate toxin, strongly suggesting its N-terminal extension occludes the active site of cognate toxin Tre1. This chain is ADP-ribosylarginine hydrolase Tri1, found in Pseudomonas putida (strain GB-1).